Reading from the N-terminus, the 933-residue chain is Progesterone receptor (933 aa).

The segment at 1 to 48 (MTELKAKGPRAPHVAGGPPSPEVGSPLLCRPAAGPFEGSQTSDTLPEV) is disordered. An AF3; mediates transcriptional activation region spans residues 1 to 164 (MTELKAKGPR…PATQRVLSPL (164 aa)). The interval 1-566 (MTELKAKGPR…YSFESLPQKI (566 aa)) is modulating, Pro-Rich. A Phosphoserine modification is found at Ser-20. The short motif at 55 to 59 (LDGLL) is the LXXL motif 1 element. The disordered stretch occupies residues 66-255 (GQDLPDEKTQ…GAAAGGGAAA (190 aa)). At Ser-81 the chain carries Phosphoserine. The short motif at 115–119 (LDTLL) is the LXXL motif 2 element. 2 positions are modified to phosphoserine: Ser-130 and Ser-162. The tract at residues 165–305 (MSRSGGKTGD…LATTMMDFIH (141 aa)) is mediates transcriptional transrepression. The Nuclear localization signal signature appears at 183 to 187 (KVLPR). A phosphoserine mark is found at Ser-190 and Ser-213. Ser-294 bears the Phosphoserine; by MAPK1 mark. The disordered stretch occupies residues 331–378 (GGAGAASAFAPPQSSPSASSTPVAVGDFPDCAYPPDAEPKDNAYPLYG). Low complexity predominate over residues 335 to 350 (AASAFAPPQSSPSASS). A Phosphoserine; by MAPK modification is found at Ser-345. A Glycyl lysine isopeptide (Lys-Gly) (interchain with G-Cter in SUMO); alternate cross-link involves residue Lys-388. Residue Lys-388 forms a Glycyl lysine isopeptide (Lys-Gly) (interchain with G-Cter in ubiquitin); alternate linkage. Residue Ser-400 is modified to Phosphoserine; by CDK2. Residues 415 to 454 (PDYPLGPPPQLPPRAPPSRPGEAAVTAAPASASVSSASSP) are disordered. Residues 418 to 433 (PLGPPPQLPPRAPPSR) show a composition bias toward pro residues. Residues 437-454 (AAVTAAPASASVSSASSP) are compositionally biased toward low complexity. Residues 456–546 (STLECILYKA…VYPPYLNYLR (91 aa)) are AF1; mediates transcriptional activation. Residue Lys-531 forms a Glycyl lysine isopeptide (Lys-Gly) (interchain with G-Cter in SUMO) linkage. 2 NR C4-type zinc fingers span residues 567 to 587 (CLIC…CGSC) and 603 to 627 (CAGR…LRKC). The segment at residues 567–639 (CLICGDEASG…AGMVLGGRKF (73 aa)) is a DNA-binding region (nuclear receptor). Position 676 is a phosphoserine (Ser-676). The region spanning 679-913 (QDIQLIPPLI…EFPEMMSEVI (235 aa)) is the NR LBD domain. The tract at residues 687–933 (LIKLLMSIEP…MVKPLLFHKK (247 aa)) is AF2; mediates transcriptional activation.

It belongs to the nuclear hormone receptor family. In terms of assembly, interacts with SMARD1 and UNC45A. Interacts with CUEDC2; the interaction promotes ubiquitination, decreases sumoylation, and represses transcriptional activity. Interacts with PIAS3; the interaction promotes sumoylation of PR in a hormone-dependent manner, inhibits DNA-binding, and alters nuclear export. Interacts with SP1; the interaction requires ligand-induced phosphorylation on Ser-345 by ERK1/2-MAPK. Interacts with PRMT2. Interacts with NCOA2 and NCOA1. Interacts with KLF9. Interacts with GTF2B. Phosphorylated on multiple serine sites. Several of these sites are hormone-dependent. Phosphorylation on Ser-294 is highly hormone-dependent and modulates ubiquitination and sumoylation on Lys-388. Phosphorylation on Ser-345 also requires induction by hormone. Basal phosphorylation on Ser-81, Ser-162, Ser-190 and Ser-400 is increased in response to progesterone and can be phosphorylated in vitro by the CDK2-A1 complex. Increased levels of phosphorylation on Ser-400 also in the presence of EGF, heregulin, IGF, PMA and FBS. Phosphorylation at this site by CDK2 is ligand-independent, and increases nuclear translocation and transcriptional activity. Phosphorylation at Ser-162 and Ser-294, but not at Ser-190, is impaired during the G(2)/M phase of the cell cycle. Phosphorylation on Ser-345 by ERK1/2 MAPK is required for interaction with SP1. Post-translationally, sumoylation is hormone-dependent and represses transcriptional activity. Sumoylation on all three sites is enhanced by PIAS3. Desumoylated by SENP1. Sumoylation on Lys-388, the main site of sumoylation, is repressed by ubiquitination on the same site, and modulated by phosphorylation at Ser-294. In terms of processing, ubiquitination is hormone-dependent and represses sumoylation on the same site. Promoted by MAPK-mediated phosphorylation on Ser-294. Palmitoylated by ZDHHC7 and ZDHHC21. Palmitoylation is required for plasma membrane targeting and for rapid intracellular signaling via ERK and AKT kinases and cAMP generation.

Its subcellular location is the nucleus. It is found in the cytoplasm. In terms of biological role, the steroid hormones and their receptors are involved in the regulation of eukaryotic gene expression and affect cellular proliferation and differentiation in target tissues. Transcriptional activator of several progesteron-dependent promoters in a variety of cell types. Involved in activation of SRC-dependent MAPK signaling on hormone stimulation. The chain is Progesterone receptor (PGR) from Trachypithecus obscurus (Dusky leaf-monkey).